The chain runs to 359 residues: N-acetyl-gamma-glutamyl-phosphate reductase (359 aa).

The active site involves Cys162.

Belongs to the NAGSA dehydrogenase family. Type 1 subfamily.

It is found in the cytoplasm. The enzyme catalyses N-acetyl-L-glutamate 5-semialdehyde + phosphate + NADP(+) = N-acetyl-L-glutamyl 5-phosphate + NADPH + H(+). The protein operates within amino-acid biosynthesis; L-arginine biosynthesis; N(2)-acetyl-L-ornithine from L-glutamate: step 3/4. Catalyzes the NADPH-dependent reduction of N-acetyl-5-glutamyl phosphate to yield N-acetyl-L-glutamate 5-semialdehyde. In Prochlorococcus marinus (strain NATL2A), this protein is N-acetyl-gamma-glutamyl-phosphate reductase.